We begin with the raw amino-acid sequence, 357 residues long: tRNA/tmRNA (uracil-C(5))-methyltransferase (357 aa).

S-adenosyl-L-methionine-binding residues include Gln-180, Tyr-209, Asn-214, Glu-230, and Asp-290. Catalysis depends on Cys-315, which acts as the Nucleophile. The active-site Proton acceptor is Glu-349.

Belongs to the class I-like SAM-binding methyltransferase superfamily. RNA M5U methyltransferase family. TrmA subfamily.

The catalysed reaction is uridine(54) in tRNA + S-adenosyl-L-methionine = 5-methyluridine(54) in tRNA + S-adenosyl-L-homocysteine + H(+). It catalyses the reaction uridine(341) in tmRNA + S-adenosyl-L-methionine = 5-methyluridine(341) in tmRNA + S-adenosyl-L-homocysteine + H(+). Dual-specificity methyltransferase that catalyzes the formation of 5-methyluridine at position 54 (m5U54) in all tRNAs, and that of position 341 (m5U341) in tmRNA (transfer-mRNA). In Campylobacter jejuni (strain RM1221), this protein is tRNA/tmRNA (uracil-C(5))-methyltransferase.